Consider the following 175-residue polypeptide: MAEKRNIFLVGPMGAGKSTIGRQLAQQLGMEFFDSDSVIEERAGAEISWIFDIEGENGFRKREERIINELTQKQGIVLSTGGGVVLSKENRNHLSARGIVVYLQTTVAKQFERTQRDKKRPLLQGVEDARQVLENLAVIRNPLYEEVADITLPTDEQSAKVMANQIIDLIDNFHG.

Position 14–19 (14–19 (GAGKST)) interacts with ATP. Ser-18 is a binding site for Mg(2+). The substrate site is built by Asp-36, Arg-60, and Gly-82. Residue Arg-120 participates in ATP binding. Arg-140 provides a ligand contact to substrate. Gln-157 is a binding site for ATP.

It belongs to the shikimate kinase family. Monomer. Requires Mg(2+) as cofactor.

The protein resides in the cytoplasm. The enzyme catalyses shikimate + ATP = 3-phosphoshikimate + ADP + H(+). It functions in the pathway metabolic intermediate biosynthesis; chorismate biosynthesis; chorismate from D-erythrose 4-phosphate and phosphoenolpyruvate: step 5/7. Catalyzes the specific phosphorylation of the 3-hydroxyl group of shikimic acid using ATP as a cosubstrate. This chain is Shikimate kinase, found in Actinobacillus succinogenes (strain ATCC 55618 / DSM 22257 / CCUG 43843 / 130Z).